Consider the following 73-residue polypeptide: Neurogranin (73 aa).

The 30-residue stretch at 26-55 (ANAAAAKIQASFRGHMTRKKIKGGEIDRKT) folds into the IQ domain. Phosphoserine; by PKC is present on S36. Basic and acidic residues predominate over residues 47–59 (KGGEIDRKTKDAE). The segment at 47–73 (KGGEIDRKTKDAECANSTRGGDLRNGD) is disordered.

Belongs to the neurogranin family.

Its function is as follows. Acts as a 'third messenger' substrate of protein kinase C-mediated molecular cascades during synaptic development and remodeling. Binds to calmodulin in the absence of calcium. This is Neurogranin (NRGN) from Serinus canaria (Island canary).